Reading from the N-terminus, the 695-residue chain is NADPH--cytochrome P450 reductase (695 aa).

Topologically, residues 1 to 8 (MAQLDTLD) are lumenal. The helical transmembrane segment at 9–31 (IVVLVVLLVGSVAYFTKGSYWAV) threads the bilayer. The Cytoplasmic portion of the chain corresponds to 32 to 695 (PKDPYAAANS…SGSYQEDVWS (664 aa)). The Flavodoxin-like domain maps to 66–221 (CVIFYGSQTG…DFLAWKEPMW (156 aa)). FMN-binding positions include 72-77 (SQTGTA), 123-126 (ATYG), 169-178 (LGNNTYEHYN), and D204. The FAD-binding FR-type domain maps to 277 to 538 (HNPYIAPIVE…HVRHSNFKLP (262 aa)). Residue R296 participates in NADP(+) binding. FAD-binding positions include 451-454 (RYYS), 469-471 (TAV), and 486-489 (GVTT). NADP(+) is bound by residues T552, 614 to 615 (SR), 620 to 624 (KVYVQ), and E656. W694 is an FAD binding site.

It belongs to the NADPH--cytochrome P450 reductase family. This sequence in the N-terminal section; belongs to the flavodoxin family. In the C-terminal section; belongs to the flavoprotein pyridine nucleotide cytochrome reductase family. The cofactor is FAD. Requires FMN as cofactor.

It is found in the endoplasmic reticulum membrane. The protein resides in the mitochondrion outer membrane. It localises to the cell membrane. The enzyme catalyses 2 oxidized [cytochrome P450] + NADPH = 2 reduced [cytochrome P450] + NADP(+) + H(+). Its function is as follows. This enzyme is required for electron transfer from NADP to cytochrome P450 in microsomes. It can also provide electron transfer to heme oxygenase and cytochrome B5. Involved in ergosterol biosynthesis. This Aspergillus fumigatus (strain ATCC MYA-4609 / CBS 101355 / FGSC A1100 / Af293) (Neosartorya fumigata) protein is NADPH--cytochrome P450 reductase.